A 376-amino-acid polypeptide reads, in one-letter code: Succinyl-diaminopimelate desuccinylase (376 aa).

A Zn(2+)-binding site is contributed by H68. The active site involves D70. D101 provides a ligand contact to Zn(2+). E135 functions as the Proton acceptor in the catalytic mechanism. Positions 136, 164, and 349 each coordinate Zn(2+).

Belongs to the peptidase M20A family. DapE subfamily. As to quaternary structure, homodimer. Zn(2+) is required as a cofactor. The cofactor is Co(2+).

The enzyme catalyses N-succinyl-(2S,6S)-2,6-diaminopimelate + H2O = (2S,6S)-2,6-diaminopimelate + succinate. Its pathway is amino-acid biosynthesis; L-lysine biosynthesis via DAP pathway; LL-2,6-diaminopimelate from (S)-tetrahydrodipicolinate (succinylase route): step 3/3. Its function is as follows. Catalyzes the hydrolysis of N-succinyl-L,L-diaminopimelic acid (SDAP), forming succinate and LL-2,6-diaminopimelate (DAP), an intermediate involved in the bacterial biosynthesis of lysine and meso-diaminopimelic acid, an essential component of bacterial cell walls. This is Succinyl-diaminopimelate desuccinylase from Marinobacter nauticus (strain ATCC 700491 / DSM 11845 / VT8) (Marinobacter aquaeolei).